The following is a 453-amino-acid chain: Bifunctional protein GlmU (453 aa).

The interval 1–225 is pyrophosphorylase; the sequence is MNIVILAAGT…EWETLGVNSK (225 aa). Residues 6-9, K20, Q71, 76-77, 98-100, G135, E150, N165, and N223 each bind UDP-N-acetyl-alpha-D-glucosamine; these read LAAG, GT, and YGD. Residue D100 participates in Mg(2+) binding. A Mg(2+)-binding site is contributed by N223. A linker region spans residues 226 to 246; that stretch reads AQLAELERIHQRTIADALLVD. The interval 247–453 is N-acetyltransferase; the sequence is GVTLADPARV…GYVRPVKKKS (207 aa). Residues R329 and K347 each contribute to the UDP-N-acetyl-alpha-D-glucosamine site. The active-site Proton acceptor is the H359. 2 residues coordinate UDP-N-acetyl-alpha-D-glucosamine: Y362 and N373. Acetyl-CoA is bound by residues A376, 382 to 383, S401, and A419; that span reads NY.

This sequence in the N-terminal section; belongs to the N-acetylglucosamine-1-phosphate uridyltransferase family. The protein in the C-terminal section; belongs to the transferase hexapeptide repeat family. Homotrimer. The cofactor is Mg(2+).

The protein resides in the cytoplasm. It carries out the reaction alpha-D-glucosamine 1-phosphate + acetyl-CoA = N-acetyl-alpha-D-glucosamine 1-phosphate + CoA + H(+). It catalyses the reaction N-acetyl-alpha-D-glucosamine 1-phosphate + UTP + H(+) = UDP-N-acetyl-alpha-D-glucosamine + diphosphate. The protein operates within nucleotide-sugar biosynthesis; UDP-N-acetyl-alpha-D-glucosamine biosynthesis; N-acetyl-alpha-D-glucosamine 1-phosphate from alpha-D-glucosamine 6-phosphate (route II): step 2/2. It functions in the pathway nucleotide-sugar biosynthesis; UDP-N-acetyl-alpha-D-glucosamine biosynthesis; UDP-N-acetyl-alpha-D-glucosamine from N-acetyl-alpha-D-glucosamine 1-phosphate: step 1/1. It participates in bacterial outer membrane biogenesis; LPS lipid A biosynthesis. Its function is as follows. Catalyzes the last two sequential reactions in the de novo biosynthetic pathway for UDP-N-acetylglucosamine (UDP-GlcNAc). The C-terminal domain catalyzes the transfer of acetyl group from acetyl coenzyme A to glucosamine-1-phosphate (GlcN-1-P) to produce N-acetylglucosamine-1-phosphate (GlcNAc-1-P), which is converted into UDP-GlcNAc by the transfer of uridine 5-monophosphate (from uridine 5-triphosphate), a reaction catalyzed by the N-terminal domain. This Burkholderia ambifaria (strain MC40-6) protein is Bifunctional protein GlmU.